The following is a 349-amino-acid chain: Merozoite surface protein P38 (349 aa).

An N-terminal signal peptide occupies residues 1–21 (MKRWSIITGIVIIFCILTCKG). 6-Cys domains follow at residues 22–149 (QVEN…ISNG) and 153–301 (KIPG…YLTN). 4 disulfides stabilise this stretch: cysteine 77-cysteine 127, cysteine 157-cysteine 183, cysteine 197-cysteine 278, and cysteine 208-cysteine 276. Asparagine 294, asparagine 295, and asparagine 301 each carry an N-linked (GlcNAc...) asparagine glycan. Asparagine 315 carries the GPI-anchor amidated asparagine lipid modification. Positions 316-349 (SEIFERIEREEISFAFSSYLSITLILLYLFFLNF) are cleaved as a propeptide — removed in mature form.

Its subcellular location is the cell surface. It is found in the cell membrane. The chain is Merozoite surface protein P38 (PFS38) from Plasmodium falciparum (isolate 3D7).